A 569-amino-acid polypeptide reads, in one-letter code: AP-4 complex accessory subunit Tepsin (569 aa).

An ENTH domain is found at 8 to 141; it reads RDRLSFLHRL…FSDALPQPPS (134 aa). The tract at residues 196–298 is disordered; the sequence is VRPGPDNPCT…SGASREPGDL (103 aa). The segment covering 219-229 has biased composition (polar residues); that stretch reads VTPSASHTHPN. Residues 260–292 show a composition bias toward low complexity; the sequence is SSPSSQNSSCTSNLSRASDSVSRSGSDSHSGAS. A Phosphoserine modification is found at serine 400. A disordered region spans residues 467 to 524; it reads VPRSPVPTPSPDTLPPALQDPGELRTQLVCSSEPGTGSEQRLENTDTPKDSSSPCPWS. A compositionally biased stretch (pro residues) spans 470–480; sequence SPVPTPSPDTL. Polar residues predominate over residues 494-505; it reads LVCSSEPGTGSE. The segment covering 506-515 has biased composition (basic and acidic residues); that stretch reads QRLENTDTPK. Residues 525–535 form an interaction with AP4B1 region; it reads PNSLFAGMELV. The interval 559–569 is interaction with AP4E1; the sequence is SEPSAFAFLNM.

As to quaternary structure, interacts with AP4B1 and AP4E1; the interaction is direct and mediates the association of TEPSIN with the adapter-like complex 4 (AP-4), a heterotetramer composed of AP4B1, AP4E1, AP4M1 and AP4S1.

It is found in the golgi apparatus. It localises to the trans-Golgi network membrane. Its subcellular location is the cytoplasmic vesicle. The protein localises to the cytoplasm. The protein resides in the cytosol. In terms of biological role, associates with the adapter-like complex 4 (AP-4) and may therefore play a role in vesicular trafficking of proteins at the trans-Golgi network. The protein is AP-4 complex accessory subunit Tepsin of Rattus norvegicus (Rat).